Consider the following 610-residue polypeptide: Butyryl-CoA dehydrogenase Swol_1933 (610 aa).

The active-site Proton acceptor is the Glu451.

This sequence belongs to the acyl-CoA dehydrogenase family. FAD is required as a cofactor.

It localises to the cytoplasm. The enzyme catalyses butanoyl-CoA + oxidized [electron-transfer flavoprotein] + H(+) = (2E)-butenoyl-CoA + reduced [electron-transfer flavoprotein]. The catalysed reaction is a short-chain 2,3-saturated fatty acyl-CoA + oxidized [electron-transfer flavoprotein] + H(+) = a short-chain (2E)-enoyl-CoA + reduced [electron-transfer flavoprotein]. It functions in the pathway lipid metabolism; butanoate metabolism. Involved in syntrophic growth of S.wolfei with butyrate, as part of the butyrate oxidation pathway. Catalyzes the oxidation of butanoyl-CoA to crotonyl-CoA. Probably passes the electrons released by this reaction on to electron-transfer flavoproteins (EtfAB) to finally generate hydrogen and/or formate. In Syntrophomonas wolfei subsp. wolfei (strain DSM 2245B / Goettingen), this protein is Butyryl-CoA dehydrogenase Swol_1933.